We begin with the raw amino-acid sequence, 237 residues long: NAD-dependent protein deacylase (237 aa).

Positions 1-235 constitute a Deacetylase sirtuin-type domain; that stretch reads MRVAVLSGAG…PGLLERLPAL (235 aa). 8-28 is a binding site for NAD(+); it reads GAGISAESGVPTFRDDKNGLW. Residues Y53 and R56 each contribute to the substrate site. 86-89 lines the NAD(+) pocket; it reads QNVD. H104 acts as the Proton acceptor in catalysis. 4 residues coordinate Zn(2+): C112, C115, C138, and C140. NAD(+)-binding positions include 177–179, 203–205, and A221; these read GTS and NPE.

The protein belongs to the sirtuin family. Class III subfamily. Zn(2+) is required as a cofactor.

Its subcellular location is the cytoplasm. The enzyme catalyses N(6)-acetyl-L-lysyl-[protein] + NAD(+) + H2O = 2''-O-acetyl-ADP-D-ribose + nicotinamide + L-lysyl-[protein]. It catalyses the reaction N(6)-succinyl-L-lysyl-[protein] + NAD(+) + H2O = 2''-O-succinyl-ADP-D-ribose + nicotinamide + L-lysyl-[protein]. In terms of biological role, NAD-dependent lysine deacetylase and desuccinylase that specifically removes acetyl and succinyl groups on target proteins. Modulates the activities of several proteins which are inactive in their acylated form. In Mycobacterium bovis (strain ATCC BAA-935 / AF2122/97), this protein is NAD-dependent protein deacylase.